Here is a 270-residue protein sequence, read N- to C-terminus: Calpain small subunit 1 (270 aa).

Residue Met-1 is modified to N-acetylmethionine. Ser-6 is modified (phosphoserine). Positions 98–132 constitute an EF-hand 1; atypical domain; the sequence is EEERQFRKLFVQLAGDDMEVSATELMNILNKVVTR. Ca(2+) contacts are provided by Ala-111, Asp-114, Glu-116, Glu-121, Asp-139, Asp-154, Asp-156, Thr-158, Lys-160, and Glu-165. EF-hand domains are found at residues 141–174, 171–206, 207–235, and 236–270; these read FGID…NNIK, NNIK…AGFH, LNQH…ISCL, and VRLD…TMYS. Lys-181 is subject to N6-acetyllysine. Residues Asp-184, Asp-186, Ser-188, Thr-190, Glu-195, and Asp-227 each coordinate Ca(2+).

As to quaternary structure, homodimer or heterodimer of a large (catalytic) and a small (regulatory) subunit. In presence of calcium, the heterodimer dissociates.

The protein localises to the cytoplasm. The protein resides in the cell membrane. Its function is as follows. Regulatory subunit of the calcium-regulated non-lysosomal thiol-protease which catalyzes limited proteolysis of substrates involved in cytoskeletal remodeling and signal transduction. Essential for embryonic development. The sequence is that of Calpain small subunit 1 (Capns1) from Rattus norvegicus (Rat).